A 193-amino-acid polypeptide reads, in one-letter code: Xanthine phosphoribosyltransferase (193 aa).

2 residues coordinate xanthine: leucine 20 and threonine 27. 128–132 (ANGQA) serves as a coordination point for 5-phospho-alpha-D-ribose 1-diphosphate. A xanthine-binding site is contributed by lysine 156.

This sequence belongs to the purine/pyrimidine phosphoribosyltransferase family. Xpt subfamily. Homodimer.

Its subcellular location is the cytoplasm. It catalyses the reaction XMP + diphosphate = xanthine + 5-phospho-alpha-D-ribose 1-diphosphate. It participates in purine metabolism; XMP biosynthesis via salvage pathway; XMP from xanthine: step 1/1. Its function is as follows. Converts the preformed base xanthine, a product of nucleic acid breakdown, to xanthosine 5'-monophosphate (XMP), so it can be reused for RNA or DNA synthesis. The protein is Xanthine phosphoribosyltransferase of Streptococcus pyogenes serotype M3 (strain ATCC BAA-595 / MGAS315).